The following is a 102-amino-acid chain: Large ribosomal subunit protein bL21 (102 aa).

Belongs to the bacterial ribosomal protein bL21 family. As to quaternary structure, part of the 50S ribosomal subunit. Contacts protein L20.

Its function is as follows. This protein binds to 23S rRNA in the presence of protein L20. The sequence is that of Large ribosomal subunit protein bL21 from Pediococcus pentosaceus (strain ATCC 25745 / CCUG 21536 / LMG 10740 / 183-1w).